Consider the following 1718-residue polypeptide: PR domain zinc finger protein 2 (1718 aa).

The 114-residue stretch at 28–141 folds into the SET domain; that stretch reads EEVRLFPSAV…PGEELLVWYN (114 aa). Positions 155 to 335 are disordered; sequence ERASARSKRS…TSEETLEDCS (181 aa). The span at 159–173 shows a compositional bias: basic residues; the sequence is ARSKRSSPKSRKGKK. The span at 189–202 shows a compositional bias: polar residues; sequence QLKTSEPDFTSANM. Positions 204-216 are enriched in basic and acidic residues; it reads DSAEGPKEDEEKP. Residues 265–297 show a composition bias toward acidic residues; that stretch reads DLGEEEEEEEEEDEEEEEDDDDDELEDEGEEEA. Positions 294 to 316 are retinoblastoma protein binding; that stretch reads EEEASMPNENSVKEPEIRCDEKP. Over residues 304-327 the composition is skewed to basic and acidic residues; that stretch reads SVKEPEIRCDEKPEDLLEEPKTTS. K347 is covalently cross-linked (Glycyl lysine isopeptide (Lys-Gly) (interchain with G-Cter in SUMO2)). 2 consecutive C2H2-type zinc fingers follow at residues 360-382 and 390-412; these read FPCQHCERKFTTKQGLERHMHIH and FKCKYCGKAFGTQINRRRHERRH. The tract at residues 405–457 is disordered; that stretch reads RRRHERRHEAGLKRKPSQTLQPSEDLADGKASGENVASKDDSSPPSLGPDCLI. S421 carries the post-translational modification Phosphoserine. The C2H2-type 3 zinc-finger motif lies at 483-506; that stretch reads HPCKYCKKVFGTHTNMRRHQRRVH. Disordered stretches follow at residues 513-550 and 622-660; these read KGVRRKGGLEEPQPPAEQAQATQNVYVPSTEPEEEGEA and EDLPKEPLGSTNSEAKKRRTASPPALPKIKAETDSDPMV. Residue S643 is modified to Phosphoserine. Glycyl lysine isopeptide (Lys-Gly) (interchain with G-Cter in SUMO2) cross-links involve residues K651, K690, and K692. The disordered stretch occupies residues 729-797; that stretch reads TSSRFKRRTS…GRDERETVSP (69 aa). Over residues 738 to 748 the composition is skewed to low complexity; the sequence is SSPPSSPQHSP. S743 bears the Phosphoserine mark. K774 participates in a covalent cross-link: Glycyl lysine isopeptide (Lys-Gly) (interchain with G-Cter in SUMO2). Residues S781, S785, and S796 each carry the phosphoserine modification. Glycyl lysine isopeptide (Lys-Gly) (interchain with G-Cter in SUMO2) cross-links involve residues K866 and K879. The tract at residues 903–1083 is disordered; that stretch reads VENPADGTRS…SPPPLSAISS (181 aa). Positions 951–969 are enriched in low complexity; it reads LQTPSLSSGQLPPLLIPTD. 2 short sequence motifs (SH3-binding) span residues 970–979 and 985–998; these read PSSPPPCPPV and PPPPLLPTVPLPAP. The span at 970 to 997 shows a compositional bias: pro residues; sequence PSSPPPCPPVLTVATPPPPLLPTVPLPA. Residues 1018–1027 show a composition bias toward low complexity; the sequence is SPLPILSPTV. Residues 1028-1038 are compositionally biased toward pro residues; sequence SPSPSPIPPVE. The short motif at 1028 to 1052 is the SH3-binding element; sequence SPSPSPIPPVEPLMSAASPGPPTLS. The span at 1042–1072 shows a compositional bias: low complexity; sequence SAASPGPPTLSSSSSSSSSSSSFSSSSSSSS. 3 consecutive C2H2-type zinc fingers follow at residues 1134–1156, 1162–1185, and 1191–1214; these read FVCNVCESPFLSIKDLTKHLSIH, FKCEFCVQLFKDKTDLSEHRFLLH, and FVCSVCKKEFAFLCNLQQHQRDLH. Glycyl lysine isopeptide (Lys-Gly) (interchain with G-Cter in SUMO2) cross-links involve residues K1147 and K1151. Residues 1244-1265 form a disordered region; it reads HMQSLPEDPLETSKEEEELNDS. Over residues 1251–1265 the composition is skewed to acidic residues; sequence DPLETSKEEEELNDS. Residues K1257 and K1281 each participate in a glycyl lysine isopeptide (Lys-Gly) (interchain with G-Cter in SUMO2) cross-link. The C2H2-type 7; atypical zinc finger occupies 1333 to 1355; sequence IRCTKCGKGVDNMPELHKHILAC. The C2H2-type 8; atypical zinc finger occupies 1455–1478; the sequence is HICPYCNREFTYIGSLNKHAAFSC. Disordered regions lie at residues 1478-1576, 1589-1612, and 1625-1652; these read CPKK…LRNS, GKKPKAVAKNHSAQLSSKTSRSLH, and KSTLASKKRTDRFNIKSRERSGGPVTRS. The segment covering 1486–1498 has biased composition (basic residues); that stretch reads PKKKVSHSSKKGG. Low complexity predominate over residues 1499–1511; it reads HSSPASSDKNSNS. Polar residues-rich tracts occupy residues 1525-1556 and 1599-1608; these read QSMQTPLGKTRARSSGPTQVPLPSSSFRSKQN and HSAQLSSKTS. Residues 1635–1645 show a composition bias toward basic and acidic residues; the sequence is DRFNIKSRERS.

It belongs to the class V-like SAM-binding methyltransferase superfamily. As to quaternary structure, binds to the retinoblastoma protein (RB). Interacts with GATA3. In terms of tissue distribution, highly expressed in retinoblastoma cell lines and in brain tumors. Also expressed in a number of other cell lines and in brain, heart, skeletal muscle, liver and spleen. Isoform 1 is expressed in testis at much higher level than isoform 3.

The protein localises to the nucleus. The catalysed reaction is L-lysyl(9)-[histone H3] + 3 S-adenosyl-L-methionine = N(6),N(6),N(6)-trimethyl-L-lysyl(9)-[histone H3] + 3 S-adenosyl-L-homocysteine + 3 H(+). Its function is as follows. S-adenosyl-L-methionine-dependent histone methyltransferase that specifically methylates 'Lys-9' of histone H3. May function as a DNA-binding transcription factor. Binds to the macrophage-specific TPA-responsive element (MTE) of the HMOX1 (heme oxygenase 1) gene and may act as a transcriptional activator of this gene. The protein is PR domain zinc finger protein 2 (PRDM2) of Homo sapiens (Human).